The sequence spans 153 residues: MLSRFMSNTWCTPLRQAQRLFSSTTTMQATLNQIKRGSGPPRRKKISTAPQLDQCPQRKGVVLRVMVLKPKKPNSAQRKACRVRLTNGNVVSAYIPGEGHDAQEHSIVYVRGGRCQDLPGVKYHVIRGAGDLSGVVNRISSRSKYGAKKPSKS.

Residues 1–20 (MLSRFMSNTWCTPLRQAQRL) constitute a mitochondrion transit peptide.

Belongs to the universal ribosomal protein uS12 family. As to quaternary structure, component of the mitochondrial small ribosomal subunit (mt-SSU). Mature yeast 74S mitochondrial ribosomes consist of a small (37S) and a large (54S) subunit. The 37S small subunit contains a 15S ribosomal RNA (15S mt-rRNA) and 34 different proteins. The 54S large subunit contains a 21S rRNA (21S mt-rRNA) and 46 different proteins. uS12m forms part of the decoding center of the mt-SSU.

It localises to the mitochondrion. Component of the mitochondrial ribosome (mitoribosome), a dedicated translation machinery responsible for the synthesis of mitochondrial genome-encoded proteins, including at least some of the essential transmembrane subunits of the mitochondrial respiratory chain. The mitoribosomes are attached to the mitochondrial inner membrane and translation products are cotranslationally integrated into the membrane. uS12m is required for respiratory growth. This chain is Small ribosomal subunit protein uS12m (MRPS12), found in Saccharomyces cerevisiae (strain ATCC 204508 / S288c) (Baker's yeast).